We begin with the raw amino-acid sequence, 628 residues long: DNA mismatch repair protein MutL (628 aa).

Positions 332 to 416 (PTSAMPAPGN…ASTAPPLSEE (85 aa)) are disordered. Over residues 375 to 396 (EGSSRSDVPYPSASQVTETTDS) the composition is skewed to polar residues.

The protein belongs to the DNA mismatch repair MutL/HexB family.

This protein is involved in the repair of mismatches in DNA. It is required for dam-dependent methyl-directed DNA mismatch repair. May act as a 'molecular matchmaker', a protein that promotes the formation of a stable complex between two or more DNA-binding proteins in an ATP-dependent manner without itself being part of a final effector complex. The protein is DNA mismatch repair protein MutL of Syntrophotalea carbinolica (strain DSM 2380 / NBRC 103641 / GraBd1) (Pelobacter carbinolicus).